The sequence spans 330 residues: Fructose-1,6-bisphosphatase class 1 (330 aa).

The Mg(2+) site is built by Glu84, Asp103, Leu105, and Asp106. Substrate is bound by residues 106–109, Asn196, and Lys262; that span reads DGSS. Mg(2+) is bound at residue Glu268.

It belongs to the FBPase class 1 family. Homotetramer. Mg(2+) is required as a cofactor.

It is found in the cytoplasm. It catalyses the reaction beta-D-fructose 1,6-bisphosphate + H2O = beta-D-fructose 6-phosphate + phosphate. Its pathway is carbohydrate biosynthesis; gluconeogenesis. In Shewanella sp. (strain MR-7), this protein is Fructose-1,6-bisphosphatase class 1.